The primary structure comprises 330 residues: Methionyl-tRNA formyltransferase (330 aa).

121–124 serves as a coordination point for (6S)-5,6,7,8-tetrahydrofolate; sequence SLLP.

It belongs to the Fmt family.

It catalyses the reaction L-methionyl-tRNA(fMet) + (6R)-10-formyltetrahydrofolate = N-formyl-L-methionyl-tRNA(fMet) + (6S)-5,6,7,8-tetrahydrofolate + H(+). Attaches a formyl group to the free amino group of methionyl-tRNA(fMet). The formyl group appears to play a dual role in the initiator identity of N-formylmethionyl-tRNA by promoting its recognition by IF2 and preventing the misappropriation of this tRNA by the elongation apparatus. This is Methionyl-tRNA formyltransferase from Burkholderia cenocepacia (strain ATCC BAA-245 / DSM 16553 / LMG 16656 / NCTC 13227 / J2315 / CF5610) (Burkholderia cepacia (strain J2315)).